The sequence spans 51 residues: Large ribosomal subunit protein eL39 (51 aa).

It belongs to the eukaryotic ribosomal protein eL39 family.

The sequence is that of Large ribosomal subunit protein eL39 from Pyrobaculum neutrophilum (strain DSM 2338 / JCM 9278 / NBRC 100436 / V24Sta) (Thermoproteus neutrophilus).